Consider the following 77-residue polypeptide: Major outer membrane lipoprotein Lpp (77 aa).

Residues 1–19 form the signal peptide; sequence MNRTKLVLGAVILGSHSAG. A lipid anchor (N-palmitoyl cysteine) is attached at C20. C20 is lipidated: S-diacylglycerol cysteine. Repeats lie at residues 23–33 and 37–47; these read NAKIDQLSSDV and NAKVDQLSNDV. Residues 26-74 are a coiled coil; it reads IDQLSSDVQTLNAKVDQLSNDVNAMRSDVQAAKDDAARANQRLDNQAHA. Residues 56–77 form a disordered region; it reads AAKDDAARANQRLDNQAHAYKK. The residue at position 77 (K77) is an N6-murein peptidoglycan lysine.

Belongs to the Lpp family. As to quaternary structure, homotrimer.

The protein resides in the cell outer membrane. Its subcellular location is the secreted. It is found in the cell wall. In terms of biological role, a highly abundant outer membrane lipoprotein that controls the distance between the inner and outer membranes. The only protein known to be covalently linked to the peptidoglycan network (PGN). Also non-covalently binds the PGN. The link between the cell outer membrane and PGN contributes to maintenance of the structural and functional integrity of the cell envelope, and maintains the correct distance between the PGN and the outer membrane. The chain is Major outer membrane lipoprotein Lpp from Serratia marcescens.